A 284-amino-acid polypeptide reads, in one-letter code: 2,3,4,5-tetrahydropyridine-2,6-dicarboxylate N-succinyltransferase (284 aa).

It belongs to the transferase hexapeptide repeat family.

The protein localises to the cytoplasm. The catalysed reaction is (S)-2,3,4,5-tetrahydrodipicolinate + succinyl-CoA + H2O = (S)-2-succinylamino-6-oxoheptanedioate + CoA. It functions in the pathway amino-acid biosynthesis; L-lysine biosynthesis via DAP pathway; LL-2,6-diaminopimelate from (S)-tetrahydrodipicolinate (succinylase route): step 1/3. This is 2,3,4,5-tetrahydropyridine-2,6-dicarboxylate N-succinyltransferase from Brucella abortus (strain S19).